A 376-amino-acid polypeptide reads, in one-letter code: MGDKKRVLVIFGGQSSEHEVSRISATSILKNINLDKFDVSMIGITKDGKWLYYDGPIDKIPSGEWEEIALKDGTRSIADRVSLFDNIISCKNNACGLEKASENEKSKKIDVVFPVLHGCNGEDGTIQGLFELAGIPYVGCGVLASAVGMDKIYAKIIFEKAGIPQADYLYFTRKEIYGDVEGVVDKIEEKFSYPVFVKPSNAGSSVGVSKAHDKNELKEALIYAARYDRKVLIEEFINGREVECAVLGNDDPVASTVGEIIPGNEFYDYKAKYIENTSKIKIPADLPEETVEQIRNYAVKAFKALDCSGLARVDFFVHKETGKVYINEINTMPGFTSISMYPMLWEESGISYPELIEKLIDLAVQRYNDNLKEYDE.

An ATP-grasp domain is found at 155–361 (KIIFEKAGIP…YPELIEKLID (207 aa)). Residue 188–243 (EEKFSYPVFVKPSNAGSSVGVSKAHDKNELKEALIYAARYDRKVLIEEFINGREVE) coordinates ATP. The Mg(2+) site is built by aspartate 314, glutamate 328, and asparagine 330.

Belongs to the D-alanine--D-alanine ligase family. Requires Mg(2+) as cofactor. Mn(2+) serves as cofactor.

Its subcellular location is the cytoplasm. It carries out the reaction 2 D-alanine + ATP = D-alanyl-D-alanine + ADP + phosphate + H(+). Its pathway is cell wall biogenesis; peptidoglycan biosynthesis. In terms of biological role, cell wall formation. This chain is D-alanine--D-alanine ligase, found in Acetivibrio thermocellus (strain ATCC 27405 / DSM 1237 / JCM 9322 / NBRC 103400 / NCIMB 10682 / NRRL B-4536 / VPI 7372) (Clostridium thermocellum).